A 1139-amino-acid chain; its full sequence is Retinoblastoma-like protein 2 (1139 aa).

A disordered region spans residues 1 to 45; the sequence is MPSGGDQSPPPPPPPPAAAASDEEEEDDGEAEDAAPPAESPTPQI. The segment covering 8-17 has biased composition (pro residues); the sequence is SPPPPPPPPA. Residues 21 to 33 show a composition bias toward acidic residues; that stretch reads SDEEEEDDGEAED. S413 carries the phosphoserine modification. A Phosphothreonine modification is found at T417. Positions 417–616 are domain A; that stretch reads TPVSTATHSL…EKIRDNENRV (200 aa). The pocket; binds E1A stretch occupies residues 417–1024; that stretch reads TPVSTATHSL…KQIKTFAMKY (608 aa). O-linked (GlcNAc) serine glycosylation is present at S420. Positions 617-827 are spacer; the sequence is PTCEEVMPPQ…KQGQSVTSSS (211 aa). Position 639 is a phosphoserine (S639). Position 642 is a phosphothreonine (T642). The disordered stretch occupies residues 654–678; the sequence is GGLGRSITSPTTLYDRYSSPPASTT. Residues S662, S672, and S688 each carry the phosphoserine modification. Residues 810–827 are compositionally biased toward low complexity; it reads ISPGGQQQKQGQSVTSSS. Disordered regions lie at residues 810-831 and 933-999; these read ISPG…NRPR and KGKR…DMEE. Positions 828–1024 are domain B; sequence NRPRKTSSLS…KQIKTFAMKY (197 aa). Polar residues predominate over residues 941–955; the sequence is SGSSDSRSHQNSPTE. 6 positions are modified to phosphoserine: S948, S952, S966, S971, S972, and S973. Residues 964–973 are compositionally biased toward low complexity; that stretch reads DSSPVMRSSS. A Phosphothreonine modification is found at T974. A compositionally biased stretch (pro residues) spans 977–987; it reads VPQPSSAPPTP. Phosphoserine is present on residues S981 and S982. T986 carries the phosphothreonine modification. Residues S1035, S1068, S1080, and S1112 each carry the phosphoserine modification.

It belongs to the retinoblastoma protein (RB) family. In terms of assembly, interacts with AATF. Interacts with KMT5B, KMT5C and USP4. Component of the DREAM complex (also named LINC complex) at least composed of E2F4, E2F5, LIN9, LIN37, LIN52, LIN54, MYBL1, MYBL2, RBL1, RBL2, RBBP4, TFDP1 and TFDP2. The complex exists in quiescent cells where it represses cell cycle-dependent genes. It dissociates in S phase when LIN9, LIN37, LIN52 and LIN54 form a subcomplex that binds to MYBL2. Interacts with RINT1. Interacts with PML (isoform PML-1, isoform PML-2, isoform PML-3, isoform PML-4 and isoform PML-5). Interacts with RBBP9. Interacts with CD53. As to quaternary structure, (Microbial infection) Interacts with JC virus small t antigen. Post-translationally, during G0 and early G1 phase of the cell cycle, phosphorylated on Ser-639 and on 5 sites within the domain B. Phosphorylation on Ser-672 in G1 leads to its ubiquitin-dependent proteolysis.

The protein resides in the nucleus. Its function is as follows. Key regulator of entry into cell division. Directly involved in heterochromatin formation by maintaining overall chromatin structure and, in particular, that of constitutive heterochromatin by stabilizing histone methylation. Recruits and targets histone methyltransferases KMT5B and KMT5C, leading to epigenetic transcriptional repression. Controls histone H4 'Lys-20' trimethylation. Probably acts as a transcription repressor by recruiting chromatin-modifying enzymes to promoters. Potent inhibitor of E2F-mediated trans-activation, associates preferentially with E2F5. Binds to cyclins A and E. Binds to and may be involved in the transforming capacity of the adenovirus E1A protein. May act as a tumor suppressor. This is Retinoblastoma-like protein 2 (RBL2) from Homo sapiens (Human).